The following is a 132-amino-acid chain: Small ribosomal subunit protein uS11 (132 aa).

This sequence belongs to the universal ribosomal protein uS11 family. As to quaternary structure, part of the 30S ribosomal subunit. Interacts with proteins S7 and S18. Binds to IF-3.

Located on the platform of the 30S subunit, it bridges several disparate RNA helices of the 16S rRNA. Forms part of the Shine-Dalgarno cleft in the 70S ribosome. This is Small ribosomal subunit protein uS11 from Chlamydia abortus (strain DSM 27085 / S26/3) (Chlamydophila abortus).